The primary structure comprises 499 residues: Glucose-6-phosphate isomerase (499 aa).

Residue E352 is the Proton donor of the active site. Residues H383 and K487 contribute to the active site.

The protein belongs to the GPI family.

The protein localises to the cytoplasm. The catalysed reaction is alpha-D-glucose 6-phosphate = beta-D-fructose 6-phosphate. Its pathway is carbohydrate biosynthesis; gluconeogenesis. It participates in carbohydrate degradation; glycolysis; D-glyceraldehyde 3-phosphate and glycerone phosphate from D-glucose: step 2/4. Catalyzes the reversible isomerization of glucose-6-phosphate to fructose-6-phosphate. In Legionella pneumophila (strain Lens), this protein is Glucose-6-phosphate isomerase.